Reading from the N-terminus, the 1343-residue chain is DNA-directed RNA polymerase subunit beta (1343 aa).

It belongs to the RNA polymerase beta chain family. In terms of assembly, the RNAP catalytic core consists of 2 alpha, 1 beta, 1 beta' and 1 omega subunit. When a sigma factor is associated with the core the holoenzyme is formed, which can initiate transcription.

The catalysed reaction is RNA(n) + a ribonucleoside 5'-triphosphate = RNA(n+1) + diphosphate. DNA-dependent RNA polymerase catalyzes the transcription of DNA into RNA using the four ribonucleoside triphosphates as substrates. The polypeptide is DNA-directed RNA polymerase subunit beta (Haemophilus influenzae (strain PittGG)).